Reading from the N-terminus, the 92-residue chain is Protein S100-A12 (92 aa).

2 EF-hand domains span residues 13-48 (NIFH…LQNT) and 49-84 (KDQP…VLKT). His-16 serves as a coordination point for Cu cation. Residue His-16 coordinates Zn(2+). Ca(2+)-binding residues include Ser-19 and His-24. Residue Asp-26 coordinates Cu cation. Asp-26 is a Zn(2+) binding site. Thr-27 and Glu-32 together coordinate Ca(2+). Residues 38 to 53 (TKELPKTLQNTKDQPT) form a hinge domain region. Positions 62, 64, 66, and 73 each coordinate Ca(2+). Cu cation-binding residues include His-86 and His-90. Residues His-86 and His-90 each coordinate Zn(2+).

Belongs to the S-100 family. Homodimer. Homooligomer (tetramer or hexamer) in the presence of calcium, zinc and copper ions. Interacts with AGER and both calcium and zinc are essential for the interaction. Interacts with CACYBP in a calcium-dependent manner. As to expression, up-regulated in stimulated inflammatory effector cells.

The protein resides in the secreted. It localises to the cytoplasm. It is found in the cytoskeleton. The protein localises to the cell membrane. Its function is as follows. S100A12 is a calcium-, zinc- and copper-binding protein which plays a prominent role in the regulation of inflammatory processes and immune response. Its pro-inflammatory activity involves recruitment of leukocytes, promotion of cytokine and chemokine production, and regulation of leukocyte adhesion and migration. Acts as an alarmin or a danger associated molecular pattern (DAMP) molecule and stimulates innate immune cells via binding to receptor for advanced glycation endproducts (AGER). Binding to AGER activates the MAP-kinase and NF-kappa-B signaling pathways leading to production of pro-inflammatory cytokines and up-regulation of cell adhesion molecules ICAM1 and VCAM1. Acts as a monocyte and mast cell chemoattractant. Can stimulate mast cell degranulation and activation which generates chemokines, histamine and cytokines inducing further leukocyte recruitment to the sites of inflammation. Can inhibit the activity of matrix metalloproteinases; MMP2, MMP3 and MMP9 by chelating Zn(2+) from their active sites. This Bos taurus (Bovine) protein is Protein S100-A12 (S100A12).